The chain runs to 230 residues: Probable methylthioribulose-1-phosphate dehydratase (230 aa).

Cys-87 lines the substrate pocket. Zn(2+)-binding residues include His-105 and His-107. Residue Glu-129 is the Proton donor/acceptor of the active site. A Zn(2+)-binding site is contributed by His-185.

Belongs to the aldolase class II family. MtnB subfamily. Zn(2+) is required as a cofactor.

It is found in the cytoplasm. It carries out the reaction 5-(methylsulfanyl)-D-ribulose 1-phosphate = 5-methylsulfanyl-2,3-dioxopentyl phosphate + H2O. The protein operates within amino-acid biosynthesis; L-methionine biosynthesis via salvage pathway; L-methionine from S-methyl-5-thio-alpha-D-ribose 1-phosphate: step 2/6. Functionally, catalyzes the dehydration of methylthioribulose-1-phosphate (MTRu-1-P) into 2,3-diketo-5-methylthiopentyl-1-phosphate (DK-MTP-1-P). This chain is Probable methylthioribulose-1-phosphate dehydratase, found in Drosophila pseudoobscura pseudoobscura (Fruit fly).